A 259-amino-acid chain; its full sequence is Ribosomal RNA small subunit methyltransferase A (259 aa).

The S-adenosyl-L-methionine site is built by asparagine 13, leucine 15, glycine 39, glutamate 60, aspartate 84, and asparagine 101.

Belongs to the class I-like SAM-binding methyltransferase superfamily. rRNA adenine N(6)-methyltransferase family. RsmA subfamily.

It localises to the cytoplasm. It catalyses the reaction adenosine(1518)/adenosine(1519) in 16S rRNA + 4 S-adenosyl-L-methionine = N(6)-dimethyladenosine(1518)/N(6)-dimethyladenosine(1519) in 16S rRNA + 4 S-adenosyl-L-homocysteine + 4 H(+). In terms of biological role, specifically dimethylates two adjacent adenosines (A1518 and A1519) in the loop of a conserved hairpin near the 3'-end of 16S rRNA in the 30S particle. May play a critical role in biogenesis of 30S subunits. In Mesomycoplasma hyopneumoniae (strain 232) (Mycoplasma hyopneumoniae), this protein is Ribosomal RNA small subunit methyltransferase A.